The sequence spans 369 residues: Glutamate 5-kinase (369 aa).

Residue lysine 9 participates in ATP binding. 3 residues coordinate substrate: serine 49, aspartate 136, and asparagine 148. ATP is bound by residues 168–169 and 210–216; these read TD and TGGMLTK. The PUA domain occupies 275–355; that stretch reads RGSVYVDEGA…KGVFIHRDDW (81 aa).

It belongs to the glutamate 5-kinase family.

The protein localises to the cytoplasm. The catalysed reaction is L-glutamate + ATP = L-glutamyl 5-phosphate + ADP. The protein operates within amino-acid biosynthesis; L-proline biosynthesis; L-glutamate 5-semialdehyde from L-glutamate: step 1/2. Functionally, catalyzes the transfer of a phosphate group to glutamate to form L-glutamate 5-phosphate. The sequence is that of Glutamate 5-kinase from Neisseria meningitidis serogroup B (strain ATCC BAA-335 / MC58).